Here is a 138-residue protein sequence, read N- to C-terminus: Translation initiation factor 2 subunit beta (138 aa).

This sequence belongs to the eIF-2-beta/eIF-5 family. Heterotrimer composed of an alpha, a beta and a gamma chain.

In terms of biological role, eIF-2 functions in the early steps of protein synthesis by forming a ternary complex with GTP and initiator tRNA. The protein is Translation initiation factor 2 subunit beta of Methanopyrus kandleri (strain AV19 / DSM 6324 / JCM 9639 / NBRC 100938).